Here is a 428-residue protein sequence, read N- to C-terminus: Enolase (428 aa).

(2R)-2-phosphoglycerate is bound at residue glutamine 163. The active-site Proton donor is the glutamate 205. Residues aspartate 242, glutamate 285, and aspartate 311 each contribute to the Mg(2+) site. Positions 336, 365, 366, and 387 each coordinate (2R)-2-phosphoglycerate. The Proton acceptor role is filled by lysine 336.

It belongs to the enolase family. Mg(2+) serves as cofactor.

It is found in the cytoplasm. Its subcellular location is the secreted. The protein localises to the cell surface. It carries out the reaction (2R)-2-phosphoglycerate = phosphoenolpyruvate + H2O. It functions in the pathway carbohydrate degradation; glycolysis; pyruvate from D-glyceraldehyde 3-phosphate: step 4/5. In terms of biological role, catalyzes the reversible conversion of 2-phosphoglycerate (2-PG) into phosphoenolpyruvate (PEP). It is essential for the degradation of carbohydrates via glycolysis. In Desulfatibacillum aliphaticivorans, this protein is Enolase.